We begin with the raw amino-acid sequence, 415 residues long: Glucose-6-phosphate isomerase (415 aa).

Glu267 (proton donor) is an active-site residue. Residues His293 and Lys406 contribute to the active site.

It belongs to the GPI family.

It localises to the cytoplasm. It carries out the reaction alpha-D-glucose 6-phosphate = beta-D-fructose 6-phosphate. Its pathway is carbohydrate biosynthesis; gluconeogenesis. It participates in carbohydrate degradation; glycolysis; D-glyceraldehyde 3-phosphate and glycerone phosphate from D-glucose: step 2/4. Catalyzes the reversible isomerization of glucose-6-phosphate to fructose-6-phosphate. In Thermus thermophilus (strain ATCC 27634 / DSM 579 / HB8), this protein is Glucose-6-phosphate isomerase.